A 64-amino-acid polypeptide reads, in one-letter code: PYLa/PGLa A (64 aa).

Residues 1-20 (MYKQIFLCLIIAALCATIMA) form the signal peptide. Positions 21-35 (EASAFADADEDDDKR) are excised as a propeptide. Leucine 59 carries the post-translational modification Leucine amide. A propeptide spanning residues 60-64 (GRRDS) is cleaved from the precursor.

Belongs to the gastrin/cholecystokinin family. Magainin subfamily. As to expression, expressed by the skin glands. Synthesized in the stomach and stored in a novel granular multinucleated cell in the gastric mucosa. Stored as active, processed peptides in large granules within the granular gland secretions of the skin.

The protein localises to the secreted. PGLa and PGLa-H display a broad-spectrum of antibacterial activity against a range of Gram-positive and Gram-negative bacteria. PGLa also displays antifungal activity against C.albicans ATCC 14053. PGLa-H shows moderate antibacterial activity against the multidrug-resistant methicillin-resistant S.aureus (MRSA) but exhibits very little hemolytic activity. In Xenopus laevis (African clawed frog), this protein is PYLa/PGLa A (pgla-a).